We begin with the raw amino-acid sequence, 589 residues long: Transcription factor MYC4 (589 aa).

Positions 99 to 150 (NTVLLGWGDGYYKGEEEKSRKKKSNPASAAEQEHRKRVIRELNSLISGGVGG) are JAZ-interaction domain. Disordered regions lie at residues 114–133 (EEKS…QEHR), 291–326 (AAPV…PNPK), 340–359 (IENG…VSNN), and 381–422 (ASVA…EAER). Positions 296–308 (NNGGNDSTSNSDS) are enriched in low complexity. The span at 309 to 322 (QPISKLCNGSSVEN) shows a compositional bias: polar residues. Positions 381–398 (ASVAKEAESNRVVVEPEK) are enriched in basic and acidic residues. The span at 399–408 (KPRKRGRKPA) shows a compositional bias: basic residues. The segment covering 409 to 422 (NGREEPLNHVEAER) has biased composition (basic and acidic residues). The bHLH domain occupies 412–461 (EEPLNHVEAERQRREKLNQRFYSLRAVVPNVSKMDKASLLGDAISYISEL).

Homo- and heterodimer. Interacts with MYB28, MYB29, MYB34, MYB51, MYB76, MYB122, MYC3, AFPH2/NINJA and the JAZ repressors TIFY10A/JAZ1, TIFY10B/JAZ2, TIFY6B/JAZ3, TIFY6A/JAZ4, TIFY11A/JAZ5, TIFY11B/JAZ6, TIFY5B/JAZ7, TIFY5A/JAZ8, TIFY7/JAZ9, TIFY9/JAZ10, TIFY3A/JAZ11 and TIFY3B/JAZ12. Expressed constitutively at low levels. Preferentially expressed in vascular tissues.

It localises to the nucleus. In terms of biological role, transcription factor involved in jasmonic acid (JA) gene regulation. With MYC2 and MYC3, controls additively subsets of JA-dependent responses. Can form complexes with all known glucosinolate-related MYBs to regulate glucosinolate biosynthesis. Binds to the G-box (5'-CACGTG-3') of promoters. Activates multiple TIFY/JAZ promoters. This is Transcription factor MYC4 (MYC4) from Arabidopsis thaliana (Mouse-ear cress).